Consider the following 205-residue polypeptide: Small ribosomal subunit protein uS4 (205 aa).

An S4 RNA-binding domain is found at 93 to 171 (SRVSSVLYRS…SPHYLEVDRE (79 aa)).

It belongs to the universal ribosomal protein uS4 family. In terms of assembly, part of the 30S ribosomal subunit. Contacts protein S5. The interaction surface between S4 and S5 is involved in control of translational fidelity.

Functionally, one of the primary rRNA binding proteins, it binds directly to 16S rRNA where it nucleates assembly of the body of the 30S subunit. In terms of biological role, with S5 and S12 plays an important role in translational accuracy. The polypeptide is Small ribosomal subunit protein uS4 (Neorickettsia sennetsu (strain ATCC VR-367 / Miyayama) (Ehrlichia sennetsu)).